Reading from the N-terminus, the 393-residue chain is Acetylornithine aminotransferase 1 (393 aa).

R131 is a N(2)-acetyl-L-ornithine binding site. Residue 215 to 218 participates in pyridoxal 5'-phosphate binding; that stretch reads DEVQ. K244 is modified (N6-(pyridoxal phosphate)lysine). T272 lines the N(2)-acetyl-L-ornithine pocket. T273 contributes to the pyridoxal 5'-phosphate binding site.

This sequence belongs to the class-III pyridoxal-phosphate-dependent aminotransferase family. ArgD subfamily. Homodimer. It depends on pyridoxal 5'-phosphate as a cofactor.

Its subcellular location is the cytoplasm. It catalyses the reaction N(2)-acetyl-L-ornithine + 2-oxoglutarate = N-acetyl-L-glutamate 5-semialdehyde + L-glutamate. The protein operates within amino-acid biosynthesis; L-arginine biosynthesis; N(2)-acetyl-L-ornithine from L-glutamate: step 4/4. The polypeptide is Acetylornithine aminotransferase 1 (Bordetella bronchiseptica (strain ATCC BAA-588 / NCTC 13252 / RB50) (Alcaligenes bronchisepticus)).